Reading from the N-terminus, the 872-residue chain is Metabotropic glutamate receptor 2 (872 aa).

An N-terminal signal peptide occupies residues M1 to A18. Residues E19–A568 are Extracellular-facing. Residues C50 and C92 are joined by a disulfide bond. Residues R57, R61, S145, A166, and T168 each coordinate L-glutamate. N-linked (GlcNAc...) asparagine glycosylation is found at N203 and N286. Disulfide bonds link C234-C518, C355-C362, C400-C407, C500-C519, C504-C522, C525-C537, and C540-C553. D295 is an L-glutamate binding site. N338 is a glycosylation site (N-linked (GlcNAc...) asparagine). Position 377 (K377) interacts with L-glutamate. N402 is a glycosylation site (N-linked (GlcNAc...) asparagine). N547 is a glycosylation site (N-linked (GlcNAc...) asparagine). Residues V569–F589 traverse the membrane as a helical segment. The Cytoplasmic segment spans residues V590–E604. A helical membrane pass occupies residues L605–A625. At K626–T633 the chain is on the extracellular side. C632 and C721 form a disulfide bridge. The chain crosses the membrane as a helical span at residues L634–L651. Over T652–Q679 the chain is Cytoplasmic. Positions A677 to A685 are important for interaction with HTR2A. A helical transmembrane segment spans residues V680–V700. Residues E701–A726 are Extracellular-facing. Residues S727 to F747 traverse the membrane as a helical segment. Residues K748–K760 lie on the Cytoplasmic side of the membrane. The helical transmembrane segment at F761–Y781 threads the bilayer. Over V782–V798 the chain is Extracellular. Residues S799 to F819 form a helical membrane-spanning segment. Residues Q820 to L872 are Cytoplasmic-facing.

This sequence belongs to the G-protein coupled receptor 3 family. Forms heterodimers with GRM3 or GRM4. Interacts with GNAI1. Interacts with TAMALIN. Interacts with HTR2A. In terms of tissue distribution, detected in neurons in brain cortex (at protein level).

It is found in the cell membrane. It localises to the synapse. The protein localises to the cell projection. The protein resides in the dendrite. Its function is as follows. Dimeric G protein-coupled receptor which is activated by the excitatory neurotransmitter L-glutamate. Plays critical roles in modulating synaptic transmission and neuronal excitability. Upon activation by glutamate, inhibits presynaptic calcium channels, reducing further glutamate release and dampening excitatory signaling. Mechanistically, ligand binding causes a conformation change that triggers signaling via guanine nucleotide-binding proteins (G proteins) and modulates the activity of down-stream effectors, such as adenylate cyclase. May mediate suppression of neurotransmission or may be involved in synaptogenesis or synaptic stabilization. This Mus musculus (Mouse) protein is Metabotropic glutamate receptor 2 (Grm2).